We begin with the raw amino-acid sequence, 1148 residues long: Pyruvate carboxylase (1148 aa).

Residues 1-457 (MSQQSIQKVL…DTSFIDTTPE (457 aa)) form the Biotin carboxylation domain. Residues K121, E205, and H240 each coordinate ATP. Residues 125-321 (REQAEKAGIP…IVQTQILVAQ (197 aa)) form the ATP-grasp domain. K242 is a catalytic residue. The region spanning 534–802 (VLLTDTTFRD…RPEMNVQGVE (269 aa)) is the Pyruvate carboxyltransferase domain. Residues 542-546 (RDAHQ) and R615 each bind substrate. D543 lines the a divalent metal cation pocket. The a divalent metal cation site is built by K712, H741, and H743. At K712 the chain carries N6-carboxylysine. T876 contributes to the substrate binding site. The Biotinyl-binding domain maps to 1071-1146 (KADRTNPSHI…QTGDLLLEIE (76 aa)). K1112 is subject to N6-biotinyllysine.

In terms of assembly, homotetramer. At very low potassium concentrations, when intracellular levels of c-di-AMP are low, interacts with apo-DarB. c-di-AMP inhibits the binding of DarB to PYC. Does not bind directly c-di-AMP. Requires biotin as cofactor.

The catalysed reaction is hydrogencarbonate + pyruvate + ATP = oxaloacetate + ADP + phosphate + H(+). Activated by the cyclic di-AMP (c-di-AMP) receptor DarB in the absence of c-di-AMP. Allosterically activated by acetyl-CoA. Inhibited by the biotin-complexing protein avidin. Functionally, catalyzes a 2-step reaction, involving the ATP-dependent carboxylation of the covalently attached biotin in the first step and the transfer of the carboxyl group to pyruvate in the second, leading to oxaloacetate production. Fulfills an anaplerotic function in B.subtilis as it is necessary for growth on glucose, but is not required for sporulation. The protein is Pyruvate carboxylase (pyc) of Bacillus subtilis (strain 168).